A 345-amino-acid chain; its full sequence is D-apiose dehydrogenase (345 aa).

15 to 16 (FF) contacts NAD(+). W24, K25, V27, and A30 together coordinate Mg(2+). Residues D37, S79, 97 to 98 (QK), N126, and 165 to 167 (QPY) contribute to the NAD(+) site. Position 98 (K98) interacts with substrate. Q165, D178, H182, and Y232 together coordinate substrate.

The protein belongs to the Gfo/Idh/MocA family.

It carries out the reaction D-apiofuranose + NAD(+) = D-apionolactone + NADH + H(+). It functions in the pathway carbohydrate metabolism. Its function is as follows. Involved in catabolism of D-apiose. Catalyzes oxidation of D-apiose to D-apionolactone. This chain is D-apiose dehydrogenase, found in Rhizobium rhizogenes (strain K84 / ATCC BAA-868) (Agrobacterium radiobacter).